The following is a 387-amino-acid chain: Patatin-01 (387 aa).

Residues 1 to 23 form the signal peptide; the sequence is MATTKSFLILSVMILATTSSTFA. Residues 32–230 form the PNPLA domain; that stretch reads LSIDGGGIKG…TVADPALLSV (199 aa). Positions 36–41 match the GXGXXG motif; the sequence is GGGIKG. The short motif at 75–79 is the GXSXG element; sequence GTSTG. Serine 77 functions as the Nucleophile in the catalytic mechanism. Asparagine 115 carries N-linked (GlcNAc...) asparagine glycosylation. Aspartate 216 functions as the Proton acceptor in the catalytic mechanism. The DGA/G motif lies at 216–218; sequence DGA. A coiled-coil region spans residues 361-385; that stretch reads ETYEEALKRFAKLLSDRKKLRANKA.

The protein belongs to the patatin family. In terms of tissue distribution, tuber.

The protein resides in the vacuole. Functionally, probable lipolytic acyl hydrolase (LAH), an activity which is thought to be involved in the response of tubers to pathogens. The polypeptide is Patatin-01 (Solanum tuberosum (Potato)).